The primary structure comprises 274 residues: Glutamate--cysteine ligase regulatory subunit (274 aa).

Ser59 carries the phosphoserine modification. At Lys263 the chain carries N6-acetyllysine.

It belongs to the aldo/keto reductase family. Glutamate--cysteine ligase light chain subfamily. In terms of assembly, heterodimer of a catalytic heavy chain and a regulatory light chain.

It functions in the pathway sulfur metabolism; glutathione biosynthesis; glutathione from L-cysteine and L-glutamate: step 1/2. The sequence is that of Glutamate--cysteine ligase regulatory subunit (GCLM) from Bos taurus (Bovine).